The following is a 512-amino-acid chain: Cobyric acid synthase (512 aa).

Residues 254–455 form the GATase cobBQ-type domain; that stretch reads EIDIAVVKLP…LHGLFDNKAL (202 aa). The Nucleophile role is filled by cysteine 335. The active site involves histidine 447.

Belongs to the CobB/CobQ family. CobQ subfamily.

It functions in the pathway cofactor biosynthesis; adenosylcobalamin biosynthesis. Functionally, catalyzes amidations at positions B, D, E, and G on adenosylcobyrinic A,C-diamide. NH(2) groups are provided by glutamine, and one molecule of ATP is hydrogenolyzed for each amidation. This chain is Cobyric acid synthase, found in Desulforamulus reducens (strain ATCC BAA-1160 / DSM 100696 / MI-1) (Desulfotomaculum reducens).